Consider the following 347-residue polypeptide: Phenylalanine--tRNA ligase alpha subunit (347 aa).

Residue E261 coordinates Mg(2+).

The protein belongs to the class-II aminoacyl-tRNA synthetase family. Phe-tRNA synthetase alpha subunit type 1 subfamily. Tetramer of two alpha and two beta subunits. Mg(2+) serves as cofactor.

The protein resides in the cytoplasm. The enzyme catalyses tRNA(Phe) + L-phenylalanine + ATP = L-phenylalanyl-tRNA(Phe) + AMP + diphosphate + H(+). The protein is Phenylalanine--tRNA ligase alpha subunit of Streptococcus pyogenes serotype M3 (strain ATCC BAA-595 / MGAS315).